The chain runs to 393 residues: G protein-activated inward rectifier potassium channel 3 (393 aa).

A disordered region spans residues 1–23 (MAQENAAFSPGSEEPPRRRGRQR). At 1-57 (MAQENAAFSPGSEEPPRRRGRQRYVEKDGRCNVQQGNVRETYRYLTDLFTTLVDLQW) the chain is on the cytoplasmic side. The chain crosses the membrane as a helical span at residues 58–82 (RLSLLFFVLAYALTWLFFGAIWWLI). Residues 83–106 (AYGRGDLEHLEDTAWTPCVNNLNG) are Extracellular-facing. Positions 107 to 118 (FVAAFLFSIETE) form an intramembrane region, helical; Pore-forming. The pore-forming intramembrane region spans 119 to 125 (TTIGYGH). The Selectivity filter signature appears at 120–125 (TIGYGH). Over 126 to 134 (RVITDQCPE) the chain is Extracellular. The helical transmembrane segment at 135 to 156 (GIVLLLLQAILGSMVNAFMVGC) threads the bilayer. Topologically, residues 157–393 (MFVKISQPNK…LPPPESESKV (237 aa)) are cytoplasmic. A disordered region spans residues 360-393 (KVEEEGAGEGAGAGDGADKEHNGCLPPPESESKV). Positions 384 to 393 (LPPPESESKV) are enriched in pro residues. The PDZ-binding signature appears at 390 to 393 (ESKV).

The protein belongs to the inward rectifier-type potassium channel (TC 1.A.2.1) family. KCNJ9 subfamily. In terms of assembly, associates with KCNJ3/GIRK1 to form a G-protein-activated heteromultimer pore-forming unit. Interacts (via PDZ-binding motif) with SNX27 (via PDZ domain); the interaction is required when endocytosed to prevent degradation in lysosomes and promote recycling to the plasma membrane. In terms of tissue distribution, expressed mainly in the brain, some expression in the skeletal muscle.

The protein localises to the membrane. The enzyme catalyses K(+)(in) = K(+)(out). Its function is as follows. Inward rectifier potassium channels are characterized by a greater tendency to allow potassium to flow into the cell rather than out of it. Their voltage dependence is regulated by the concentration of extracellular potassium; as external potassium is raised, the voltage range of the channel opening shifts to more positive voltages. The inward rectification is mainly due to the blockage of outward current by internal magnesium. This receptor is controlled by G proteins. Unable to produce channel activity when expressed alone. Forms a functional channel in association with KCNJ3/GIRK1. This chain is G protein-activated inward rectifier potassium channel 3 (Kcnj9), found in Mus musculus (Mouse).